Consider the following 638-residue polypeptide: E3 ubiquitin-protein ligase TRIM47 (638 aa).

Met1 carries the N-acetylmethionine modification. Residues 9 to 58 (CPICLEPLREPVTLPCGHNFCLACLGALWPHRGASGAGGPGGAARCPLCQ) form an RING-type zinc finger. Thr72 carries the phosphothreonine modification. The disordered stretch occupies residues 79-119 (LRQGSGPGSGPGPAPALAPEPSAPSALPSVPEPSAPCAPEP). Composition is skewed to pro residues over residues 88 to 100 (GPGP…PEPS) and 108 to 119 (VPEPSAPCAPEP). The segment at 177–217 (LEESLCPRHLRPLERYCRAERVCLCEACAAQEHRGHELVPL) adopts a B box-type zinc-finger fold. Residues Cys182, His185, Cys204, and His209 each contribute to the Zn(2+) site. Residues 296-324 (MLGRSQGDLRRQEEQRSRLSRARQNLSQV) are a coiled coil. Disordered regions lie at residues 300 to 322 (SQGD…QNLS) and 384 to 411 (LRGP…LEST). A compositionally biased stretch (basic and acidic residues) spans 302–312 (GDLRRQEEQRS). The region spanning 410–631 (STNLLESEAP…LQIGPLKKSC (222 aa)) is the B30.2/SPRY domain. Position 461 is a phosphoserine (Ser461). The residue at position 582 (Arg582) is an Omega-N-methylarginine. At Ser588 the chain carries Phosphoserine.

It belongs to the TRIM/RBCC family. As to expression, low expression in most tissues. Higher expression in kidney tubular cells. Overexpressed in astrocytoma tumor cells.

Its subcellular location is the cytoplasm. The protein localises to the nucleus. It catalyses the reaction S-ubiquitinyl-[E2 ubiquitin-conjugating enzyme]-L-cysteine + [acceptor protein]-L-lysine = [E2 ubiquitin-conjugating enzyme]-L-cysteine + N(6)-ubiquitinyl-[acceptor protein]-L-lysine.. The protein operates within protein modification; protein ubiquitination. In terms of biological role, E3 ubiquitin-protein ligase that mediates the ubiquitination and proteasomal degradation of CYLD. The sequence is that of E3 ubiquitin-protein ligase TRIM47 from Homo sapiens (Human).